A 335-amino-acid chain; its full sequence is Adenosine deaminase (335 aa).

2 residues coordinate Zn(2+): His12 and His14. 2 residues coordinate substrate: His14 and Asp16. His197 serves as a coordination point for Zn(2+). The Proton donor role is filled by Glu200. Residue Asp278 participates in Zn(2+) binding.

The protein belongs to the metallo-dependent hydrolases superfamily. Adenosine and AMP deaminases family. Adenosine deaminase subfamily. The cofactor is Zn(2+).

It catalyses the reaction adenosine + H2O + H(+) = inosine + NH4(+). The enzyme catalyses 2'-deoxyadenosine + H2O + H(+) = 2'-deoxyinosine + NH4(+). Its function is as follows. Catalyzes the hydrolytic deamination of adenosine and 2-deoxyadenosine. In Clostridium botulinum (strain Kyoto / Type A2), this protein is Adenosine deaminase.